A 780-amino-acid chain; its full sequence is Pentatricopeptide repeat-containing protein At1g79540 (780 aa).

17 PPR repeats span residues 91-125 (SRES…GVSV), 126-160 (DSYC…DCRP), 161-196 (DVFT…NCSP), 197-231 (NLYT…GISP), 232-266 (NRVT…GNYP), 267-301 (DSVA…GFVL), 302-336 (GLRG…NIKP), 337-371 (DIIL…GISP), 372-406 (DTYC…ESFP), 407-441 (DACT…GCSP), 442-476 (SVAT…RPAS), 481-515 (LSHS…GSSP), 516-550 (DIVS…GLSP), 551-585 (DSVT…RHSP), 653-687 (TLGP…KILV), 688-722 (TPPS…NFKL), and 723-758 (MPRV…GYNV).

Belongs to the PPR family. P subfamily.

The chain is Pentatricopeptide repeat-containing protein At1g79540 from Arabidopsis thaliana (Mouse-ear cress).